A 1209-amino-acid chain; its full sequence is MSNFFKICCVKDPGGSAKENLRKMDQVNGHFVSATCPFSGESVELKVDSNQKQVKPNLRIKVPQPIRLKNHVAHDENFDTLHSRINEVTHFNTKCSEKVCQTSIMDIPGRGDTPRTAEEVFKDAQAFLTQYYASIKRENSEAHKARLDEVKRELKERGTYQLKTSELVFGAKLAWRNATRCIGRIQWKKLQIFDCREVTTASGMFEALCNHIKYATNKGNIRSAITIFPQRTDGKHDYRIWNPQLINYAGYQEPDGSITGDPARVEFTEICMKLGWKAPRTPWDILPLVLSADGKDPEFFELPKEIVMEVQFEHPEYDWFKDMGWKWYALPAVSNMRLACGGLEFTANSFNGWYMGTEIGCRNLCDESRLNIVEAVAKKMGLDTNSFVSLWKDKALVEVNIAVLHSFHRDNVSIVDHHSASEQFQKHLENENKSRGGCPADWIWIVPPMSSSLTTVFHQEMALYYIRPSYDYQEPPWKTHQWTKSDGTKTVHRKFHFKQIARAVKFTSKLFGRALSKRIKATILYATETGKSEHYAKELGTIFGHAFNAQVHCMSEYDMFSIEHETLVLIVASTFGNGEPPANGVDFAEHLFQMLYNETNNNRGDGTSDLGSGTFKTPTPKSLMRSNSMMTPSFEYKRQLTRLESNKSSVAGASSIEQIGPLSNVCFAVFGLGSSAYPKFCHFGKTVDKILGDLGGERILELACGDELYGQEQQFRAWSSKIFQVACETFCLDENGMVKDAKKALGDVPLTEETVRFGKYQGDTKLKAALEASFRKQLITCKVKENKNLGDFSADRATVFVDMQPETEFKYDPGDHVGVLACNRKEIVDAVLERMKDVDDYDKTVQLQVMKETLTPTGAIKTWEQHERLPAVTIRQIFTRFLDITTPPSTTVLKYLSKACTDQNDAAQLKELAIDSNKYDDWRHLHYPHLAEVLAQFPSCRPQASLLAALLPSLQPRFYSISSSPLAHPHRIHITCAVVVYRTQNGQGPMHYGVCSTYLQNLKPEDEALVFIRRAPSFHMPKDLSAPLILVGPGSGIAPFRGFWHHRKHQIKNLIPNKQKPGPVWLFFGCRNRGMDLYKEEKEKALADGVLSKVFLALSREDSVEKKHIQTLLEDEGAEISRMLLDENGHFYVCGDCKMAEEVQQKLKEIMKKHAKMTEQEYEEFILNLMDENRYHEDIFGITLRTAEVQSASREFAKRTRQESQKSQT.

S103 is a (6R)-L-erythro-5,6,7,8-tetrahydrobiopterin binding site. Position 181 (C181) interacts with heme b. 5 residues coordinate L-arginine: Q244, W353, Y354, E358, and N363. The (6R)-L-erythro-5,6,7,8-tetrahydrobiopterin site is built by W444 and F457. A heme b-binding site is contributed by Y472. The segment at V491–F511 is calmodulin-binding. The Flavodoxin-like domain occupies A521–F723. T527–K531 contacts FMN. Residues R603–S622 form a disordered region. V669–L700 provides a ligand contact to FMN. The region spanning K776–P1021 is the FAD-binding FR-type domain. FAD is bound by residues Y811 to C822 and L954 to S964. NADP(+)-binding positions include L1028 to L1147 and N1128 to V1143.

This sequence belongs to the NOS family. It depends on heme b as a cofactor. FAD is required as a cofactor. FMN serves as cofactor. Constitutively expressed at a low level in the larval fat body, hemocyte, Malpighian tubule, midgut, silk gland and adult antenna.

The catalysed reaction is 2 L-arginine + 3 NADPH + 4 O2 + H(+) = 2 L-citrulline + 2 nitric oxide + 3 NADP(+) + 4 H2O. Its activity is regulated as follows. Expression is dependent on and stimulated by NADPH, calcium, BH4 and calmodulin. The activity is not dependent on FAD and is not stimulated by its presence. Functionally, produces nitric oxide (NO) which is a messenger molecule with diverse functions throughout the body. Involved in the induction of immune gene expression. The sequence is that of Nitric oxide synthase from Bombyx mori (Silk moth).